A 641-amino-acid polypeptide reads, in one-letter code: Transcription termination factor MTERF2, chloroplastic (641 aa).

Disordered stretches follow at residues 54 to 80 (LKLN…DLDG) and 606 to 641 (FEAG…DLTE). A compositionally biased stretch (acidic residues) spans 610–641 (LDSEDSQPSDENISDQEIAFSDEAEEEEDLTE).

The protein belongs to the mTERF family.

The protein localises to the plastid. It localises to the chloroplast. In terms of biological role, transcription termination factor involved in processing of plastid transcripts. Essential for embryogenesis. This is Transcription termination factor MTERF2, chloroplastic from Arabidopsis thaliana (Mouse-ear cress).